A 247-amino-acid polypeptide reads, in one-letter code: MAGHSKFANIKHRKAAQDSKRGKIFTKLIREIIVATKDGGPEAENNPRLRAAVDKALSNNMTRDTINRAVKRGAGGDGEADLETVIYEGYGPAGTAVMVECMTDNRNRTVSGVRNAFSKSGGNLGTDGSVNYLFDKKGVISYAAGLDEDVMMEAALESGAEDIETNDDGSIDVYTTPSDFGAVKDALDAAGFDSVNAEVTLVPSTKADLDLETAPKLLRLIDALEDLDDVQEVYHNGEITDEIAEQL.

It belongs to the TACO1 family.

It localises to the cytoplasm. The chain is Probable transcriptional regulatory protein PBPRA1113 from Photobacterium profundum (strain SS9).